The following is a 919-amino-acid chain: Eukaryotic translation initiation factor 3 subunit C (919 aa).

A disordered region spans residues methionine 1–alanine 28. Acidic residues predominate over residues serine 11 to valine 20. Serine 34, serine 165, and serine 177 each carry phosphoserine. Residues leucine 154–alanine 275 form a disordered region. The span at glutamine 162–glutamate 171 shows a compositional bias: acidic residues. A compositionally biased stretch (acidic residues) spans alanine 210 to asparagine 236. Basic and acidic residues predominate over residues methionine 241–isoleucine 269. A PCI domain is found at phenylalanine 640–proline 816. Residues phenylalanine 848–glutamate 919 are disordered. The segment covering glutamine 883–asparagine 894 has biased composition (basic residues). Residues glutamine 895–glutamate 919 are compositionally biased toward low complexity.

The protein belongs to the eIF-3 subunit C family. As to quaternary structure, component of the eukaryotic translation initiation factor 3 (eIF-3) complex. The eIF-3 complex interacts with pix.

The protein resides in the cytoplasm. In terms of biological role, component of the eukaryotic translation initiation factor 3 (eIF-3) complex, which is involved in protein synthesis of a specialized repertoire of mRNAs and, together with other initiation factors, stimulates binding of mRNA and methionyl-tRNAi to the 40S ribosome. The eIF-3 complex specifically targets and initiates translation of a subset of mRNAs involved in cell proliferation. This is Eukaryotic translation initiation factor 3 subunit C from Drosophila willistoni (Fruit fly).